We begin with the raw amino-acid sequence, 132 residues long: Nickel-responsive regulator (132 aa).

Residues His76, His87, His89, and Cys95 each coordinate Ni(2+).

Belongs to the transcriptional regulatory CopG/NikR family. As to quaternary structure, homotetramer. Ni(2+) is required as a cofactor.

In terms of biological role, transcriptional repressor of the nikABCDE operon. Is active in the presence of excessive concentrations of intracellular nickel. The chain is Nickel-responsive regulator from Klebsiella pneumoniae (strain 342).